A 1203-amino-acid polypeptide reads, in one-letter code: DNA-directed RNA polymerase subunit beta (1203 aa).

Basic and acidic residues predominate over residues 1174-1195; it reads AAQEAKAAFEAEEAEKATKAEA. Residues 1174–1203 form a disordered region; sequence AAQEAKAAFEAEEAEKATKAEATEEAAEQE.

It belongs to the RNA polymerase beta chain family. In terms of assembly, the RNAP catalytic core consists of 2 alpha, 1 beta, 1 beta' and 1 omega subunit. When a sigma factor is associated with the core the holoenzyme is formed, which can initiate transcription.

The enzyme catalyses RNA(n) + a ribonucleoside 5'-triphosphate = RNA(n+1) + diphosphate. Its function is as follows. DNA-dependent RNA polymerase catalyzes the transcription of DNA into RNA using the four ribonucleoside triphosphates as substrates. This is DNA-directed RNA polymerase subunit beta from Streptococcus pneumoniae serotype 19F (strain G54).